The sequence spans 311 residues: Tyrosine recombinase XerD (311 aa).

One can recognise a Core-binding (CB) domain in the interval 1 to 83; sequence MEFIAQFLEM…TIKSYYAFLI (83 aa). The Tyr recombinase domain maps to 104 to 299; sequence KLPIILSIDQ…HTNHLKKALL (196 aa). Residues Arg145, Lys176, His251, Arg254, and His277 contribute to the active site. Residue Tyr286 is the O-(3'-phospho-DNA)-tyrosine intermediate of the active site.

The protein belongs to the 'phage' integrase family. XerD subfamily. In terms of assembly, forms a cyclic heterotetrameric complex composed of two molecules of XerC and two molecules of XerD.

The protein resides in the cytoplasm. Site-specific tyrosine recombinase, which acts by catalyzing the cutting and rejoining of the recombining DNA molecules. The XerC-XerD complex is essential to convert dimers of the bacterial chromosome into monomers to permit their segregation at cell division. It also contributes to the segregational stability of plasmids. This is Tyrosine recombinase XerD from Rickettsia prowazekii (strain Madrid E).